A 232-amino-acid polypeptide reads, in one-letter code: Octanoyltransferase (232 aa).

Residues 33 to 216 (GRAQDTVILL…HLVRALSNGS (184 aa)) form the BPL/LPL catalytic domain. Substrate is bound by residues 71–78 (RGGRITWH), 146–148 (AIG), and 159–161 (GFA). Cys177 acts as the Acyl-thioester intermediate in catalysis.

The protein belongs to the LipB family.

The protein resides in the cytoplasm. The catalysed reaction is octanoyl-[ACP] + L-lysyl-[protein] = N(6)-octanoyl-L-lysyl-[protein] + holo-[ACP] + H(+). It participates in protein modification; protein lipoylation via endogenous pathway; protein N(6)-(lipoyl)lysine from octanoyl-[acyl-carrier-protein]: step 1/2. In terms of biological role, catalyzes the transfer of endogenously produced octanoic acid from octanoyl-acyl-carrier-protein onto the lipoyl domains of lipoate-dependent enzymes. Lipoyl-ACP can also act as a substrate although octanoyl-ACP is likely to be the physiological substrate. This Clavibacter sepedonicus (Clavibacter michiganensis subsp. sepedonicus) protein is Octanoyltransferase.